We begin with the raw amino-acid sequence, 158 residues long: Probable deoxyuridine 5'-triphosphate nucleotidohydrolase (158 aa).

It belongs to the dUTPase family. Mg(2+) is required as a cofactor.

The enzyme catalyses dUTP + H2O = dUMP + diphosphate + H(+). The protein operates within pyrimidine metabolism; dUMP biosynthesis; dUMP from dCTP (dUTP route): step 1/2. This enzyme is involved in nucleotide metabolism: it produces dUMP, the immediate precursor of thymidine nucleotides and it decreases the intracellular concentration of dUTP so that uracil cannot be incorporated into DNA. It does probably not deaminate dCTP. This chain is Probable deoxyuridine 5'-triphosphate nucleotidohydrolase, found in Sulfolobus islandicus rod-shaped virus 1 (SIRV-1).